The sequence spans 112 residues: T cell receptor alpha variable 7 (112 aa).

Residues 1–21 form the signal peptide; that stretch reads MEKMRRPVLIIFCLCLGWANG. The 91-residue stretch at 22-112 folds into the Ig-like domain; the sequence is ENQVEHSPHF…DSATYFCAVD (91 aa). Cysteine 44 and cysteine 109 are disulfide-bonded. N-linked (GlcNAc...) asparagine glycans are attached at residues asparagine 84 and asparagine 90.

In terms of assembly, alpha-beta TR is a heterodimer composed of an alpha and beta chain; disulfide-linked. The alpha-beta TR is associated with the transmembrane signaling CD3 coreceptor proteins to form the TR-CD3 (TcR or TCR). The assembly of alpha-beta TR heterodimers with CD3 occurs in the endoplasmic reticulum where a single alpha-beta TR heterodimer associates with one CD3D-CD3E heterodimer, one CD3G-CD3E heterodimer and one CD247 homodimer forming a stable octameric structure. CD3D-CD3E and CD3G-CD3E heterodimers preferentially associate with TR alpha and TR beta chains, respectively. The association of the CD247 homodimer is the last step of TcR assembly in the endoplasmic reticulum and is required for transport to the cell surface.

The protein resides in the cell membrane. In terms of biological role, v region of the variable domain of T cell receptor (TR) alpha chain that participates in the antigen recognition. Alpha-beta T cell receptors are antigen specific receptors which are essential to the immune response and are present on the cell surface of T lymphocytes. Recognize peptide-major histocompatibility (MH) (pMH) complexes that are displayed by antigen presenting cells (APC), a prerequisite for efficient T cell adaptive immunity against pathogens. Binding of alpha-beta TR to pMH complex initiates TR-CD3 clustering on the cell surface and intracellular activation of LCK that phosphorylates the ITAM motifs of CD3G, CD3D, CD3E and CD247 enabling the recruitment of ZAP70. In turn ZAP70 phosphorylates LAT, which recruits numerous signaling molecules to form the LAT signalosome. The LAT signalosome propagates signal branching to three major signaling pathways, the calcium, the mitogen-activated protein kinase (MAPK) kinase and the nuclear factor NF-kappa-B (NF-kB) pathways, leading to the mobilization of transcription factors that are critical for gene expression and essential for T cell growth and differentiation. The T cell repertoire is generated in the thymus, by V-(D)-J rearrangement. This repertoire is then shaped by intrathymic selection events to generate a peripheral T cell pool of self-MH restricted, non-autoaggressive T cells. Post-thymic interaction of alpha-beta TR with the pMH complexes shapes TR structural and functional avidity. In Homo sapiens (Human), this protein is T cell receptor alpha variable 7.